A 142-amino-acid polypeptide reads, in one-letter code: NTF2-related export protein 2 (142 aa).

The region spanning 17–136 (AAEEFVNIYY…WKIASDCFRF (120 aa)) is the NTF2 domain.

Associates with NXF1, NXF2, NXF3 and NXF5.

It localises to the nucleus. Its subcellular location is the cytoplasm. Functionally, regulator of protein export for NES-containing proteins. Also plays a role in mRNA nuclear export. This is NTF2-related export protein 2 from Homo sapiens (Human).